Reading from the N-terminus, the 153-residue chain is Small ribosomal subunit protein uS13 (153 aa).

The interval 129-153 (RGQRTKSTFRHGSSVGVSRTRPTGN) is disordered. Over residues 143-153 (VGVSRTRPTGN) the composition is skewed to polar residues.

This sequence belongs to the universal ribosomal protein uS13 family. In terms of assembly, part of the 30S ribosomal subunit. Forms a loose heterodimer with protein S19. Forms two bridges to the 50S subunit in the 70S ribosome.

Functionally, located at the top of the head of the 30S subunit, it contacts several helices of the 16S rRNA. In the 70S ribosome it contacts the 23S rRNA (bridge B1a) and protein L5 of the 50S subunit (bridge B1b), connecting the 2 subunits; these bridges are implicated in subunit movement. This chain is Small ribosomal subunit protein uS13, found in Methanosphaera stadtmanae (strain ATCC 43021 / DSM 3091 / JCM 11832 / MCB-3).